The following is a 247-amino-acid chain: E3 SUMO-protein ligase NSE2 (247 aa).

Residue Met-1 is modified to N-acetylmethionine. Residues Lys-90 and Lys-107 each participate in a glycyl lysine isopeptide (Lys-Gly) (interchain with G-Cter in SUMO2) cross-link. Position 116 is a phosphoserine (Ser-116). Glycyl lysine isopeptide (Lys-Gly) (interchain with G-Cter in SUMO2) cross-links involve residues Lys-125 and Lys-130. The SP-RING-type zinc-finger motif lies at 154–240 (MDEDMIVTQS…LRRAIESHNK (87 aa)). Residues Cys-185, His-187, Cys-210, and Cys-215 each contribute to the Zn(2+) site.

It belongs to the NSE2 family. As to quaternary structure, component of the SMC5-SMC6 complex which consists at least of SMC5, SMC6, NSMCE2, NSMCE1, NSMCE4A or EID3 and NSMCE3. Post-translationally, sumoylated, possibly via autosumoylation.

It localises to the nucleus. The protein localises to the chromosome. Its subcellular location is the telomere. The protein resides in the PML body. Its pathway is protein modification; protein sumoylation. E3 SUMO-protein ligase component of the SMC5-SMC6 complex, a complex involved in DNA double-strand break repair by homologous recombination. Is not be required for the stability of the complex. The complex may promote sister chromatid homologous recombination by recruiting the SMC1-SMC3 cohesin complex to double-strand breaks. Acts as an E3 ligase mediating SUMO attachment to various proteins such as SMC6L1 and TSNAX, the shelterin complex subunits TERF1, TERF2, TINF2 and TERF2IP, RAD51AP1, and maybe the cohesin components RAD21 and STAG2. Required for recruitment of telomeres to PML nuclear bodies. Required for sister chromatid cohesion during prometaphase and mitotic progression. The protein is E3 SUMO-protein ligase NSE2 (Nsmce2) of Rattus norvegicus (Rat).